We begin with the raw amino-acid sequence, 330 residues long: Catharanthine synthase (330 aa).

The Involved in the stabilization of the negatively charged intermediate by the formation of the oxyanion hole signature appears at 81–83 (HGA). Glycine 84 serves as a coordination point for catharanthine. Serine 173 functions as the Proton acceptor in the catalytic mechanism. Residue aspartate 274 is part of the active site. Tyrosine 305 provides a ligand contact to catharanthine. Residue tyrosine 305 is the Proton donor/acceptor of the active site.

Belongs to the 'GDXG' lipolytic enzyme family. As to quaternary structure, interacts with dehydroprecondylocarpine acetate synthase (DPAS). In terms of tissue distribution, expressed in leaf epidermis.

It is found in the cytoplasm. It localises to the cytosol. The protein resides in the nucleus. The catalysed reaction is dehydrosecodine = catharanthine. Its pathway is alkaloid biosynthesis. Functionally, component of iboga and aspidosperma monoterpenoid indole alkaloids (MIAs, e.g. tabersonine and catharanthine) biosynthesis pathway from 19E-geissoschizine, psychoactive compounds likely to be used in the treatment of opioid dependence. Catalyzes the conversion of dehydrosecodine to catharanthine. This Catharanthus roseus (Madagascar periwinkle) protein is Catharanthine synthase.